The chain runs to 321 residues: Agamous-like MADS-box protein AGL80 (321 aa).

One can recognise an MADS-box domain in the interval 1–61 (MTRKKVKLAY…DTNPEVWPSN (61 aa)). A coiled-coil region spans residues 89 to 114 (FLKQRIAKATETLRRQRKDSRELEMT).

In terms of assembly, interacts with AGL61 and AGL62. Forms a heterodimer with AGL61. Interacts with MEE14/CBP1. Expressed in the central cell of the female gametophyte and in early endosperm. Also detected in ovaries, young siliques, roots, leaves, stems, young flowers and anthers.

The protein resides in the nucleus. Probable transcription factor. Controls central cell differentiation during female gametophyte development. Required for the expression of DEMETER and DD46, but not for the expression of FIS2. Probable transcription factor that may function in the maintenance of the proper function of the central cell in pollen tube attraction. This chain is Agamous-like MADS-box protein AGL80 (AGL80), found in Arabidopsis thaliana (Mouse-ear cress).